Reading from the N-terminus, the 631-residue chain is tRNA uridine 5-carboxymethylaminomethyl modification enzyme MnmG (631 aa).

Residues 13 to 18, valine 125, and serine 180 contribute to the FAD site; that span reads GGGHAG. Position 273-287 (273-287) interacts with NAD(+); the sequence is GPRYCPSIEDKVMRF. Residue glutamine 370 coordinates FAD.

It belongs to the MnmG family. Homodimer. Heterotetramer of two MnmE and two MnmG subunits. FAD is required as a cofactor.

It is found in the cytoplasm. Functionally, NAD-binding protein involved in the addition of a carboxymethylaminomethyl (cmnm) group at the wobble position (U34) of certain tRNAs, forming tRNA-cmnm(5)s(2)U34. The chain is tRNA uridine 5-carboxymethylaminomethyl modification enzyme MnmG from Vibrio parahaemolyticus serotype O3:K6 (strain RIMD 2210633).